We begin with the raw amino-acid sequence, 54 residues long: Ovomucoid (54 aa).

The Kazal-like domain occupies 4–54 (VDCSEYPKPACTLEHRPLCGSDNKTYGNKCNFCNAVVESNGTLTLSHFGKC). 3 cysteine pairs are disulfide-bonded: Cys-6–Cys-36, Cys-14–Cys-33, and Cys-22–Cys-54. An N-linked (GlcNAc...) asparagine glycan is attached at Asn-43.

Its subcellular location is the secreted. The chain is Ovomucoid from Pavo muticus (Green peafowl).